The following is a 286-amino-acid chain: Acetyl-coenzyme A carboxylase carboxyl transferase subunit beta (286 aa).

In terms of domain architecture, CoA carboxyltransferase N-terminal spans 23–286 (IWVKCNNCNQ…ITNKPEPKKE (264 aa)). Residues Cys27, Cys30, Cys46, and Cys49 each contribute to the Zn(2+) site. The segment at 27–49 (CNNCNQMIYKIELEKNLEVCPKC) adopts a C4-type zinc-finger fold.

The protein belongs to the AccD/PCCB family. As to quaternary structure, acetyl-CoA carboxylase is a heterohexamer composed of biotin carboxyl carrier protein (AccB), biotin carboxylase (AccC) and two subunits each of ACCase subunit alpha (AccA) and ACCase subunit beta (AccD). Zn(2+) serves as cofactor.

It is found in the cytoplasm. The enzyme catalyses N(6)-carboxybiotinyl-L-lysyl-[protein] + acetyl-CoA = N(6)-biotinyl-L-lysyl-[protein] + malonyl-CoA. It functions in the pathway lipid metabolism; malonyl-CoA biosynthesis; malonyl-CoA from acetyl-CoA: step 1/1. In terms of biological role, component of the acetyl coenzyme A carboxylase (ACC) complex. Biotin carboxylase (BC) catalyzes the carboxylation of biotin on its carrier protein (BCCP) and then the CO(2) group is transferred by the transcarboxylase to acetyl-CoA to form malonyl-CoA. The protein is Acetyl-coenzyme A carboxylase carboxyl transferase subunit beta of Wigglesworthia glossinidia brevipalpis.